Reading from the N-terminus, the 355-residue chain is Probable dual-specificity RNA methyltransferase RlmN (355 aa).

The active-site Proton acceptor is the E89. The region spanning 95–322 (YENRKTVCLS…KRLGVPTSIR (228 aa)) is the Radical SAM core domain. C102 and C333 are joined by a disulfide. [4Fe-4S] cluster contacts are provided by C109, C113, and C116. Residues 159 to 160 (GE), S191, 214 to 216 (SLH), and N290 each bind S-adenosyl-L-methionine. The active-site S-methylcysteine intermediate is the C333.

The protein belongs to the radical SAM superfamily. RlmN family. [4Fe-4S] cluster is required as a cofactor.

The protein resides in the cytoplasm. It carries out the reaction adenosine(2503) in 23S rRNA + 2 reduced [2Fe-2S]-[ferredoxin] + 2 S-adenosyl-L-methionine = 2-methyladenosine(2503) in 23S rRNA + 5'-deoxyadenosine + L-methionine + 2 oxidized [2Fe-2S]-[ferredoxin] + S-adenosyl-L-homocysteine. The catalysed reaction is adenosine(37) in tRNA + 2 reduced [2Fe-2S]-[ferredoxin] + 2 S-adenosyl-L-methionine = 2-methyladenosine(37) in tRNA + 5'-deoxyadenosine + L-methionine + 2 oxidized [2Fe-2S]-[ferredoxin] + S-adenosyl-L-homocysteine. In terms of biological role, specifically methylates position 2 of adenine 2503 in 23S rRNA and position 2 of adenine 37 in tRNAs. In Thermus thermophilus (strain ATCC 27634 / DSM 579 / HB8), this protein is Probable dual-specificity RNA methyltransferase RlmN.